The sequence spans 146 residues: Leghemoglobin Lb120-8 (146 aa).

A Globin domain is found at 2–146 (GFTEKQEALV…LASAIKKAMN (145 aa)). Nitrated tyrosine occurs at positions 24 and 29. Ser44 contributes to the heme b binding site. The residue at position 44 (Ser44) is a Phosphoserine. Residue His61 participates in O2 binding. Heme b contacts are provided by Lys64, His93, and Lys96. At Tyr134 the chain carries Nitrated tyrosine.

The protein belongs to the plant globin family. Monomer. Post-translationally, nitrated in effective nodules and particularly in hypoxic conditions; this mechanism may play a protective role in the symbiosis by buffering toxic peroxynitrite NO(2)(-). Nitration level decrease during nodule senescence. Phosphorylation at Ser-44 disrupts the molecular environment of its porphyrin ring oxygen binding pocket, thus leading to a reduced oxygen consumption and to the delivery of oxygen O(2) to symbiosomes. In terms of tissue distribution, root nodules.

The protein resides in the cytoplasm. It localises to the cytosol. The protein localises to the nucleus. Leghemoglobin that reversibly binds oxygen O(2) through a pentacoordinated heme iron. In root nodules, facilitates the diffusion of oxygen to the bacteroids while preventing the bacterial nitrogenase from being inactivated by buffering dioxygen, nitric oxide and carbon monoxide, and promoting the formation of reactive oxygen species (ROS, e.g. H(2)O(2)). This role is essential for symbiotic nitrogen fixation (SNF). The chain is Leghemoglobin Lb120-8 from Pisum sativum (Garden pea).